The chain runs to 378 residues: Acetylornithine deacetylase (378 aa).

His-76 contributes to the Zn(2+) binding site. The active site involves Asp-78. Asp-108 contacts Zn(2+). Residue Glu-140 is part of the active site. 3 residues coordinate Zn(2+): Glu-141, Glu-165, and His-351.

It belongs to the peptidase M20A family. ArgE subfamily. Homodimer. Zn(2+) is required as a cofactor. It depends on Co(2+) as a cofactor. The cofactor is glutathione.

The protein localises to the cytoplasm. It carries out the reaction N(2)-acetyl-L-ornithine + H2O = L-ornithine + acetate. Its pathway is amino-acid biosynthesis; L-arginine biosynthesis; L-ornithine from N(2)-acetyl-L-ornithine (linear): step 1/1. In terms of biological role, catalyzes the hydrolysis of the amide bond of N(2)-acetylated L-amino acids. Cleaves the acetyl group from N-acetyl-L-ornithine to form L-ornithine, an intermediate in L-arginine biosynthesis pathway, and a branchpoint in the synthesis of polyamines. The polypeptide is Acetylornithine deacetylase (Vibrio vulnificus (strain CMCP6)).